The chain runs to 596 residues: MLKKTPETVSDSDDAEERGSERRHRIHPLTIIRRIFGNAVFSSLTRRILFFNVAATVVLVGGILYLNQFREGLIDARVESLLTQGEIIAGAVSASASVDTNSITINPEKLLELQAGQSITPAPNDEDLSFPINPERVAPVLRRLISPTRTRARLFDADANLLLDSRHLYSRGQVLRFDLPPVTPETQTWGDWFTSMFNRMLQPSSLPQYKEAPGGDGSIYPEVMNALTGVRGAVVRVTEKGELIVSVAVPVQRFRAVLGVLLLSTQAGDIDKIVHAERLAIMRVFGIATLVNIVLSLLLSSTIATPLRRLSAAAIRVRRGARTREEIPDFSARQDEIGNLSIALREMTTALYDRIDAIESFAADVSHELKNPLTSLRSAVETLPRAKTEESKQRLTEIIFHDVRRLDRLISDISDASRLDAELARADASPLDLDVLMKGLVDISRQISTKKKSVAIDYVADRKAGAKTSFVVNGHDLRIGQIVTNLIENARSFVSEESGRITVRLSRHKDRCIVQVEDNGPGIQAEDIDRIFERFYTDRPASEGFGQNSGLGLSISRQIAEAHGGSLRAENVVDKYGVISGARFTLSLPAAETHER.

The disordered stretch occupies residues 1–22 (MLKKTPETVSDSDDAEERGSER). The Cytoplasmic segment spans residues 1–47 (MLKKTPETVSDSDDAEERGSERRHRIHPLTIIRRIFGNAVFSSLTRR). The helical transmembrane segment at 48–68 (ILFFNVAATVVLVGGILYLNQ) threads the bilayer. Residues 69 to 283 (FREGLIDARV…VHAERLAIMR (215 aa)) lie on the Periplasmic side of the membrane. Residues 284–304 (VFGIATLVNIVLSLLLSSTIA) form a helical membrane-spanning segment. One can recognise an HAMP domain in the interval 301 to 356 (STIATPLRRLSAAAIRVRRGARTREEIPDFSARQDEIGNLSIALREMTTALYDRID). At 305-596 (TPLRRLSAAA…SLPAAETHER (292 aa)) the chain is on the cytoplasmic side. Residues 364-592 (DVSHELKNPL…RFTLSLPAAE (229 aa)) enclose the Histidine kinase domain. His367 carries the post-translational modification Phosphohistidine.

It localises to the cell inner membrane. The catalysed reaction is ATP + protein L-histidine = ADP + protein N-phospho-L-histidine.. Its function is as follows. Member of a two-component regulatory system ChvG/ChvI. Activates ChvI by phosphorylation (Potential). The chain is Sensor protein ChvG (chvG) from Agrobacterium fabrum (strain C58 / ATCC 33970) (Agrobacterium tumefaciens (strain C58)).